The primary structure comprises 426 residues: 10-deoxymethynolide desosaminyltransferase (426 aa).

This sequence belongs to the glycosyltransferase 28 family. Forms a complex with DesVIII.

The catalysed reaction is 10-deoxymethynolide + dTDP-alpha-D-desosamine = 10-deoxymethymycin + dTDP + H(+). Its pathway is antibiotic biosynthesis. Involved in the biosynthesis of the macrolide antibiotics methymycin, neomethymycin, narbomycin, and pikromycin. Catalyzes the attachment of dTDP-D-desosamine onto 12- and 14-membered macrolactone rings 10-deoxymethynolide and narbonolide to produce 10-deoxymethymycin (YC-17) and narbomycin. DesVII is unique among glycosyltransferases in that it requires an additional protein component, DesVIII, for its activity. DesVII can recognize and process not only cyclic substrates of different ring size, but also a variety of linear substrates albeit with reduced, but measurable activities. Both L-sugars and D-sugars are recognized as substrates and variant substitutions at C-3 and C-4 are tolerated, but deoxygenation at C-6 is required. This Streptomyces venezuelae protein is 10-deoxymethynolide desosaminyltransferase.